We begin with the raw amino-acid sequence, 462 residues long: Glutamate--tRNA ligase 2 (462 aa).

The short motif at 8-18 is the 'HIGH' region element; that stretch reads PSPTGLLHVGG. The 'KMSKS' region signature appears at 227–231; it reads PLSKR. Residue Lys-230 participates in ATP binding.

Belongs to the class-I aminoacyl-tRNA synthetase family. Glutamate--tRNA ligase type 1 subfamily. As to quaternary structure, monomer.

Its subcellular location is the cytoplasm. It carries out the reaction tRNA(Glu) + L-glutamate + ATP = L-glutamyl-tRNA(Glu) + AMP + diphosphate. In terms of biological role, catalyzes the attachment of glutamate to tRNA(Glu) in a two-step reaction: glutamate is first activated by ATP to form Glu-AMP and then transferred to the acceptor end of tRNA(Glu). The protein is Glutamate--tRNA ligase 2 of Thermosipho melanesiensis (strain DSM 12029 / CIP 104789 / BI429).